A 298-amino-acid polypeptide reads, in one-letter code: Release factor glutamine methyltransferase (298 aa).

S-adenosyl-L-methionine-binding positions include 131–135 (GTGTG), aspartate 162, tryptophan 189, and asparagine 205. A substrate-binding site is contributed by 205–208 (NPPY).

Belongs to the protein N5-glutamine methyltransferase family. PrmC subfamily.

The enzyme catalyses L-glutaminyl-[peptide chain release factor] + S-adenosyl-L-methionine = N(5)-methyl-L-glutaminyl-[peptide chain release factor] + S-adenosyl-L-homocysteine + H(+). In terms of biological role, methylates the class 1 translation termination release factors RF1/PrfA and RF2/PrfB on the glutamine residue of the universally conserved GGQ motif. The chain is Release factor glutamine methyltransferase from Pasteurella multocida (strain Pm70).